A 383-amino-acid polypeptide reads, in one-letter code: 4-hydroxy-3-methylbut-2-en-1-yl diphosphate synthase (flavodoxin) (383 aa).

[4Fe-4S] cluster-binding residues include Cys-275, Cys-278, Cys-310, and Glu-317.

It belongs to the IspG family. It depends on [4Fe-4S] cluster as a cofactor.

It catalyses the reaction (2E)-4-hydroxy-3-methylbut-2-enyl diphosphate + oxidized [flavodoxin] + H2O + 2 H(+) = 2-C-methyl-D-erythritol 2,4-cyclic diphosphate + reduced [flavodoxin]. The protein operates within isoprenoid biosynthesis; isopentenyl diphosphate biosynthesis via DXP pathway; isopentenyl diphosphate from 1-deoxy-D-xylulose 5-phosphate: step 5/6. Converts 2C-methyl-D-erythritol 2,4-cyclodiphosphate (ME-2,4cPP) into 1-hydroxy-2-methyl-2-(E)-butenyl 4-diphosphate. This is 4-hydroxy-3-methylbut-2-en-1-yl diphosphate synthase (flavodoxin) from Dinoroseobacter shibae (strain DSM 16493 / NCIMB 14021 / DFL 12).